The chain runs to 185 residues: Elongation factor P (185 aa).

Belongs to the elongation factor P family.

The protein localises to the cytoplasm. It participates in protein biosynthesis; polypeptide chain elongation. Functionally, involved in peptide bond synthesis. Stimulates efficient translation and peptide-bond synthesis on native or reconstituted 70S ribosomes in vitro. Probably functions indirectly by altering the affinity of the ribosome for aminoacyl-tRNA, thus increasing their reactivity as acceptors for peptidyl transferase. This Desulfitobacterium hafniense (strain DSM 10664 / DCB-2) protein is Elongation factor P.